Here is a 539-residue protein sequence, read N- to C-terminus: Hydroxylamine reductase (539 aa).

[4Fe-4S] cluster is bound by residues Cys3, Cys6, Cys14, and Cys20. Residues His232, Glu256, Cys300, Cys392, Cys420, Cys445, Glu480, and Lys482 each contribute to the hybrid [4Fe-2O-2S] cluster site. Cys392 carries the cysteine persulfide modification.

This sequence belongs to the HCP family. [4Fe-4S] cluster serves as cofactor. Requires hybrid [4Fe-2O-2S] cluster as cofactor.

The protein resides in the cytoplasm. The enzyme catalyses A + NH4(+) + H2O = hydroxylamine + AH2 + H(+). Functionally, catalyzes the reduction of hydroxylamine to form NH(3) and H(2)O. This is Hydroxylamine reductase from Chlorobaculum tepidum (strain ATCC 49652 / DSM 12025 / NBRC 103806 / TLS) (Chlorobium tepidum).